An 88-amino-acid polypeptide reads, in one-letter code: Small ribosomal subunit protein bS20 (88 aa).

The interval M1–R25 is disordered. The segment covering R12–K22 has biased composition (basic and acidic residues).

This sequence belongs to the bacterial ribosomal protein bS20 family.

Binds directly to 16S ribosomal RNA. The polypeptide is Small ribosomal subunit protein bS20 (Dinoroseobacter shibae (strain DSM 16493 / NCIMB 14021 / DFL 12)).